Reading from the N-terminus, the 417-residue chain is Putative competence-damage inducible protein (417 aa).

It belongs to the CinA family.

The chain is Putative competence-damage inducible protein from Shouchella clausii (strain KSM-K16) (Alkalihalobacillus clausii).